The sequence spans 685 residues: Hemocyanin subunit X (685 aa).

The N-terminal stretch at Met1–Ala20 is a signal peptide. Cu cation-binding residues include His210, His214, and His243. A glycan (N-linked (GlcNAc...) asparagine) is linked at Asn329. 3 residues coordinate Cu cation: His367, His371, and His407. Cys577 and Cys625 form a disulfide bridge.

The protein belongs to the tyrosinase family. Hemocyanin subfamily.

The protein localises to the secreted. Its subcellular location is the extracellular space. Its function is as follows. Hemocyanins are copper-containing oxygen carriers occurring freely dissolved in the hemolymph of many mollusks and arthropods. The polypeptide is Hemocyanin subunit X (HCX) (Scutigera coleoptrata (House centipede)).